Here is a 353-residue protein sequence, read N- to C-terminus: Photosystem II D2 protein (353 aa).

The residue at position 2 (T2) is an N-acetylthreonine. T2 carries the phosphothreonine modification. The helical transmembrane segment at 41–61 threads the bilayer; that stretch reads CAYFAVGGWFTGTTFVTSWYT. H118 provides a ligand contact to chlorophyll a. The chain crosses the membrane as a helical span at residues 125–141; it reads GFMLRQFELARSVQLRP. Pheophytin a contacts are provided by Q130 and N143. A helical transmembrane segment spans residues 153–166; that stretch reads VFVSVFLIYPLGQS. A chlorophyll a-binding site is contributed by H198. Residues 208–228 traverse the membrane as a helical segment; it reads AALLCAIHGATVENTLFEDGD. Residues H215 and F262 each contribute to the a plastoquinone site. H215 provides a ligand contact to Fe cation. H269 is a binding site for Fe cation. The chain crosses the membrane as a helical span at residues 279–295; sequence GLWMSALGVVGLALNLR.

Belongs to the reaction center PufL/M/PsbA/D family. As to quaternary structure, PSII is composed of 1 copy each of membrane proteins PsbA, PsbB, PsbC, PsbD, PsbE, PsbF, PsbH, PsbI, PsbJ, PsbK, PsbL, PsbM, PsbT, PsbX, PsbY, PsbZ, Psb30/Ycf12, at least 3 peripheral proteins of the oxygen-evolving complex and a large number of cofactors. It forms dimeric complexes. Requires The D1/D2 heterodimer binds P680, chlorophylls that are the primary electron donor of PSII, and subsequent electron acceptors. It shares a non-heme iron and each subunit binds pheophytin, quinone, additional chlorophylls, carotenoids and lipids. There is also a Cl(-1) ion associated with D1 and D2, which is required for oxygen evolution. The PSII complex binds additional chlorophylls, carotenoids and specific lipids. as cofactor.

It localises to the plastid. It is found in the chloroplast thylakoid membrane. The catalysed reaction is 2 a plastoquinone + 4 hnu + 2 H2O = 2 a plastoquinol + O2. Its function is as follows. Photosystem II (PSII) is a light-driven water:plastoquinone oxidoreductase that uses light energy to abstract electrons from H(2)O, generating O(2) and a proton gradient subsequently used for ATP formation. It consists of a core antenna complex that captures photons, and an electron transfer chain that converts photonic excitation into a charge separation. The D1/D2 (PsbA/PsbD) reaction center heterodimer binds P680, the primary electron donor of PSII as well as several subsequent electron acceptors. D2 is needed for assembly of a stable PSII complex. The polypeptide is Photosystem II D2 protein (Jasminum nudiflorum (Winter jasmine)).